The chain runs to 948 residues: MGNNFSVESPSLAPFLCGKRKYLYNLERNLEALHKVMQDLNAMRNDLLKRLSKEEEIGLQGLQEVKEWISMVEEIEPKANRLLDESVSEIQRLSRYGYCSLIPASTYRYSEKVLTTMEGVETLRSKGVFEAVVHRALPPLVIKMPPIQLTVSQAKLLDTAWARLMDINVGTLGIYGRGGVGKTTLLTKLRNKLLVDAFGLVIFVVVGFEEVESIQDEIGKRLGLQWRRETKERKAAEILAVLKEKRFVLLLDGIQRELDLEEIGVPFPSRDNGCKIVFTTQSLEACDESKWVDAKVEITCLSPEEAWDLFQETVGENTLRSHQDIPKLARVVASTCRGLPLALNLIGEAMSGKRTVREWRYTIHVLASSTAEFPDMEDGTLPILKSIYDNMSDEIIRLCFLYCALFPENLDIGKEDLVNYWICEGILAKEDREEAEIQGYEIICDLVRMRLLMESGNGNCVKMHGMVREMALWIASEHFVVVGGERIHQMLNVNDWRMIRRMSVTSTQIQNISDSPQCSELTTLVFRRNRHLKWISGAFFQWMTGLVVLDLSFNRELAELPEEVSSLVLLRFLNLSWTCIKGLPLGLKELKSLIHLDLDYTSNLQEVDVIASLLNLQVLRLFHSVSMDLKLMEDIQLLKSLKELSLTVRGSSVLQRLLSIQRLASSIRRLHLTETTIVDGGILSLNAIFSLCELDILGCNILEITIDWRCTIQREIIPQFQNIRTMTIHRCEYLRDLTWLLLAPCLGELSVSECPQMEEVISKDKAMAKLGNTSEQPFQNLTKLVLDGLPKLESIYWTPLPFPVLEYLVIRRCPELRRLPFNSESTIGNQVETIIEEQVIKIVEWEDEATKQRFSHFNNRDFVQMAEDPKMDGLTSESHPIQTIDLVGTTGSGETATANNIQGKKVVQSGTHATVVTMECQTYKVFTPDCPINNMIDTPGTNFLLCYT.

Residues 20–57 (RKYLYNLERNLEALHKVMQDLNAMRNDLLKRLSKEEEI) adopt a coiled-coil conformation. The region spanning 134 to 432 (HRALPPLVIK…CEGILAKEDR (299 aa)) is the NB-ARC domain. An ATP-binding site is contributed by 176–183 (GRGGVGKT). LRR repeat units lie at residues 498 to 519 (MIRR…PQCS), 520 to 542 (ELTT…FFQW), 545 to 567 (GLVV…VSSL), 569 to 591 (LLRF…KELK), 592 to 614 (SLIH…ASLL), 615 to 636 (NLQV…EDIQ), 640 to 661 (SLKE…LSIQ), 666 to 686 (SIRR…LSLN), and 690 to 711 (SLCE…WRCT).

Belongs to the disease resistance NB-LRR family.

In terms of biological role, potential disease resistance protein. The protein is Probable disease resistance protein At5g47260 of Arabidopsis thaliana (Mouse-ear cress).